Consider the following 243-residue polypeptide: Phosphatidylserine decarboxylase proenzyme (243 aa).

Serine 212 functions as the Schiff-base intermediate with substrate; via pyruvic acid in the catalytic mechanism. Position 212 is a pyruvic acid (Ser); by autocatalysis (serine 212).

It belongs to the phosphatidylserine decarboxylase family. PSD-A subfamily. As to quaternary structure, heterodimer of a large membrane-associated beta subunit and a small pyruvoyl-containing alpha subunit. Pyruvate serves as cofactor. Post-translationally, is synthesized initially as an inactive proenzyme. Formation of the active enzyme involves a self-maturation process in which the active site pyruvoyl group is generated from an internal serine residue via an autocatalytic post-translational modification. Two non-identical subunits are generated from the proenzyme in this reaction, and the pyruvate is formed at the N-terminus of the alpha chain, which is derived from the carboxyl end of the proenzyme. The post-translation cleavage follows an unusual pathway, termed non-hydrolytic serinolysis, in which the side chain hydroxyl group of the serine supplies its oxygen atom to form the C-terminus of the beta chain, while the remainder of the serine residue undergoes an oxidative deamination to produce ammonia and the pyruvoyl prosthetic group on the alpha chain.

Its subcellular location is the cell membrane. The catalysed reaction is a 1,2-diacyl-sn-glycero-3-phospho-L-serine + H(+) = a 1,2-diacyl-sn-glycero-3-phosphoethanolamine + CO2. The protein operates within phospholipid metabolism; phosphatidylethanolamine biosynthesis; phosphatidylethanolamine from CDP-diacylglycerol: step 2/2. Catalyzes the formation of phosphatidylethanolamine (PtdEtn) from phosphatidylserine (PtdSer). In Mycobacterium leprae (strain Br4923), this protein is Phosphatidylserine decarboxylase proenzyme.